The chain runs to 165 residues: Chorismate pyruvate-lyase (165 aa).

Substrate-binding residues include methionine 35, arginine 77, leucine 115, and glutamate 156.

Belongs to the UbiC family. Monomer.

Its subcellular location is the cytoplasm. It carries out the reaction chorismate = 4-hydroxybenzoate + pyruvate. It functions in the pathway cofactor biosynthesis; ubiquinone biosynthesis. Removes the pyruvyl group from chorismate, with concomitant aromatization of the ring, to provide 4-hydroxybenzoate (4HB) for the ubiquinone pathway. In Salmonella schwarzengrund (strain CVM19633), this protein is Chorismate pyruvate-lyase.